A 470-amino-acid polypeptide reads, in one-letter code: 1-aminocyclopropane-1-carboxylate synthase 9 (470 aa).

Residues E47 and Y85 each contribute to the substrate site. Residue K272 is modified to N6-(pyridoxal phosphate)lysine.

It belongs to the class-I pyridoxal-phosphate-dependent aminotransferase family. In terms of assembly, homodimer and heterodimer. In vivo, the relevance of heterodimerization with other ACS enzymes is however unsure. Interacts (via its C-terminal region) with FEI1, FEI2, ETO1 and EOL1. Pyridoxal 5'-phosphate is required as a cofactor. May be processed at its C-terminus. In terms of tissue distribution, expressed in roots and siliques.

The catalysed reaction is S-adenosyl-L-methionine = 1-aminocyclopropane-1-carboxylate + S-methyl-5'-thioadenosine + H(+). It functions in the pathway alkene biosynthesis; ethylene biosynthesis via S-adenosyl-L-methionine; ethylene from S-adenosyl-L-methionine: step 1/2. In terms of biological role, 1-aminocyclopropane-1-carboxylate synthase (ACS) enzymes catalyze the conversion of S-adenosyl-L-methionine (SAM) into 1-aminocyclopropane-1-carboxylate (ACC), a direct precursor of ethylene. This Arabidopsis thaliana (Mouse-ear cress) protein is 1-aminocyclopropane-1-carboxylate synthase 9 (ACS9).